Consider the following 199-residue polypeptide: CASP-like protein 1B2 (199 aa).

At 1–22 the chain is on the cytoplasmic side; sequence MALQSEEKLEVGYSSLQPKTRK. The helical transmembrane segment at 23–43 threads the bilayer; the sequence is WVLLMLRVLAFFATAAATVVM. The Extracellular segment spans residues 44 to 74; sequence GLNKETKTLVVATVGSTPIKASLAAKFQHTP. The chain crosses the membrane as a helical span at residues 75–95; that stretch reads AFVFFVIANGLASIHNLVMIM. Over 96–112 the chain is Cytoplasmic; it reads GDLFGQKLDYKGLRLAM. Residues 113-133 form a helical membrane-spanning segment; it reads IAILDMMTVALVSGGVSAAAF. The Extracellular segment spans residues 134-163; it reads MAELGKNGNSHARWNKICDKFETFCDHGGG. A helical membrane pass occupies residues 164–184; sequence ALIASFAGLILMLIISVMSII. At 185–199 the chain is on the cytoplasmic side; sequence KLLIKPKPDSTIVVP.

This sequence belongs to the Casparian strip membrane proteins (CASP) family. As to quaternary structure, homodimer and heterodimers.

It localises to the cell membrane. This is CASP-like protein 1B2 from Populus trichocarpa (Western balsam poplar).